The primary structure comprises 20 residues: Endo-1,6-beta-glucanase (20 aa).

Belongs to the glycosyl hydrolase 5 (cellulase A) family.

The protein resides in the secreted. Its subcellular location is the extracellular space. It carries out the reaction Random hydrolysis of (1-&gt;6)-linkages in (1-&gt;6)-beta-D-glucans.. Its function is as follows. Endo-1,6-beta-glucanase that has highest activity against the beta-1,6-glucan pustulan. Also active against the beta-1,6-glucan lutean. Lower activity against laminarin (beta-1,3-glucan with beta-1,6-branches). Little or no activity against gentiobiose, yeast glucan, lichenin, scleroglucan, curdlan, barley glucan, CM cellulose, HE cellulose, pachyman and pullulan. The polypeptide is Endo-1,6-beta-glucanase (Acremonium sp).